The primary structure comprises 398 residues: Large ribosomal subunit protein uL3 (398 aa).

Positions 1 to 10 (MSHRKFEAPR) are enriched in basic and acidic residues. The interval 1–34 (MSHRKFEAPRHGNLGFRPRKRAARHQGKVKSFPK) is disordered. The segment covering 17-28 (RPRKRAARHQGK) has biased composition (basic residues).

This sequence belongs to the universal ribosomal protein uL3 family.

The protein resides in the cytoplasm. In terms of biological role, the L3 protein is a component of the large subunit of cytoplasmic ribosomes. This is Large ribosomal subunit protein uL3 (rpl3) from Dictyostelium discoideum (Social amoeba).